The following is a 233-amino-acid chain: Forkhead box protein L3 (233 aa).

Positions 32-130 (RPAYSYIALI…ENGNYRRRRR (99 aa)) form a DNA-binding region, fork-head. Residues 125-134 (YRRRRRRRGP) show a composition bias toward basic residues. The tract at residues 125–198 (YRRRRRRRGP…PRDLKFSIDY (74 aa)) is disordered. A compositionally biased stretch (pro residues) spans 175-184 (REPPASPAPP). Positions 185 to 194 (GKEHPRDLKF) are enriched in basic and acidic residues.

Its subcellular location is the nucleus. Probable transcriptional regulator. The sequence is that of Forkhead box protein L3 from Homo sapiens (Human).